A 293-amino-acid chain; its full sequence is Elongation factor Ts (293 aa).

The interval 80–83 (TDFV) is involved in Mg(2+) ion dislocation from EF-Tu.

Belongs to the EF-Ts family.

Its subcellular location is the cytoplasm. In terms of biological role, associates with the EF-Tu.GDP complex and induces the exchange of GDP to GTP. It remains bound to the aminoacyl-tRNA.EF-Tu.GTP complex up to the GTP hydrolysis stage on the ribosome. The sequence is that of Elongation factor Ts from Janthinobacterium sp. (strain Marseille) (Minibacterium massiliensis).